Consider the following 204-residue polypeptide: AFG2-interacting ribosome maturation factor (204 aa).

As to quaternary structure, part of the 55LCC heterohexameric ATPase complex. Does not associate with pre-60S ribosomal particles.

The protein resides in the nucleus. The protein localises to the cytoplasm. Functionally, part of the 55LCC heterohexameric ATPase complex which is chromatin-associated and promotes replisome proteostasis to maintain replication fork progression and genome stability. Required for replication fork progression, sister chromatid cohesion, and chromosome stability. The ATPase activity is specifically enhanced by replication fork DNA and is coupled to cysteine protease-dependent cleavage of replisome substrates in response to replication fork damage. Uses ATPase activity to process replisome substrates in S-phase, facilitating their proteolytic turnover from chromatin to ensure DNA replication and mitotic fidelity. Involved in the cytoplasmic maturation steps of pre-60S ribosomal particles by promoting the release of shuttling protein RSL24D1/RLP24 from the pre-ribosomal particles. The sequence is that of AFG2-interacting ribosome maturation factor (airim) from Xenopus tropicalis (Western clawed frog).